An 822-amino-acid polypeptide reads, in one-letter code: Epidermal growth factor receptor kinase substrate 8 (822 aa).

Polar residues-rich tracts occupy residues Met-1–Ser-10 and Ser-17–Gln-30. The interval Met-1–Thr-39 is disordered. Ser-58 is modified (phosphoserine). A PTB domain is found at Gln-64–Arg-194. 2 disordered regions span residues Ile-202 to Thr-225 and Ser-298 to Ala-320. Over residues Ser-208–Pro-221 the composition is skewed to pro residues. Thr-223 is subject to Phosphothreonine. Over residues Lys-299–Lys-309 the composition is skewed to basic residues. A Phosphothreonine modification is found at Thr-317. Ser-476 carries the post-translational modification Phosphoserine. The SH3 domain maps to Gln-531 to Pro-590. The tract at residues Glu-612–Glu-689 is disordered. The segment covering Ala-618–Val-645 has biased composition (pro residues). Residue Ser-625 is modified to Phosphoserine. The residue at position 629 (Thr-629) is a Phosphothreonine; by MAPK. The interval Lys-649 to His-822 is effector region. 3 positions are modified to phosphoserine: Ser-659, Ser-662, and Ser-685. The segment covering Asp-671–Met-687 has biased composition (basic and acidic residues). Positions Val-680–Leu-698 are amphipathic helix. Helix bundle regions lie at residues Val-718–Gly-738, Gly-752–Ser-757, Glu-762–Cys-767, and Val-766–Glu-785. Residues Ser-787–His-822 are disordered. Residues Ser-811 and Ser-815 each carry the phosphoserine modification.

It belongs to the EPS8 family. In terms of assembly, homodimer. Part of a complex consisting of ABI1, EPS8 and SOS1. Interacts with MYO15A and WHRN. Interacts with LANCL1. Interacts with EGFR; mediates EPS8 phosphorylation. Interacts with BAIAP2. Interacts with SHB. In terms of processing, ubiquitinated by the SCF(FBXW5) E3 ubiquitin-protein ligase complex during G2 phase, leading to its transient degradation and subsequent cell shape changes required to allow mitotic progression. Reappears at the midzone of dividing cells. Post-translationally, phosphorylation at Ser-625 and Thr-629 by MAPK following BDNF treatment promotes removal from actin and filopodia formation. Phosphorylated by several receptor tyrosine kinases. Expressed in all tissues analyzed, including heart, brain, placenta, lung, liver, skeletal muscle, kidney and pancreas. Expressed in all epithelial and fibroblastic lines examined and in some, but not all, hematopoietic cells.

The protein resides in the cytoplasm. Its subcellular location is the cell cortex. It localises to the cell projection. The protein localises to the ruffle membrane. It is found in the growth cone. The protein resides in the stereocilium. Its subcellular location is the synapse. It localises to the synaptosome. Functionally, signaling adapter that controls various cellular protrusions by regulating actin cytoskeleton dynamics and architecture. Depending on its association with other signal transducers, can regulate different processes. Together with SOS1 and ABI1, forms a trimeric complex that participates in transduction of signals from Ras to Rac by activating the Rac-specific guanine nucleotide exchange factor (GEF) activity. Acts as a direct regulator of actin dynamics by binding actin filaments and has both barbed-end actin filament capping and actin bundling activities depending on the context. Displays barbed-end actin capping activity when associated with ABI1, thereby regulating actin-based motility process: capping activity is auto-inhibited and inhibition is relieved upon ABI1 interaction. Also shows actin bundling activity when associated with BAIAP2, enhancing BAIAP2-dependent membrane extensions and promoting filopodial protrusions. Involved in the regulation of processes such as axonal filopodia growth, stereocilia length, dendritic cell migration and cancer cell migration and invasion. Acts as a regulator of axonal filopodia formation in neurons: in the absence of neurotrophic factors, negatively regulates axonal filopodia formation via actin-capping activity. In contrast, it is phosphorylated in the presence of BDNF leading to inhibition of its actin-capping activity and stimulation of filopodia formation. Component of a complex with WHRN and MYO15A that localizes at stereocilia tips and is required for elongation of the stereocilia actin core. Indirectly involved in cell cycle progression; its degradation following ubiquitination being required during G2 phase to promote cell shape changes. The protein is Epidermal growth factor receptor kinase substrate 8 (EPS8) of Homo sapiens (Human).